The chain runs to 156 residues: Arginine repressor (156 aa).

This sequence belongs to the ArgR family.

It localises to the cytoplasm. It functions in the pathway amino-acid biosynthesis; L-arginine biosynthesis [regulation]. Its function is as follows. Regulates arginine biosynthesis genes. The polypeptide is Arginine repressor (Cronobacter sakazakii (strain ATCC BAA-894) (Enterobacter sakazakii)).